A 671-amino-acid chain; its full sequence is Phospholipid:diacylglycerol acyltransferase 1 (671 aa).

Residues 1-46 form a disordered region; sequence MPLIHRKKPTEKPSTPPSEEVVHDEDSQKKPHESSKSHHKKSNGGG. Topologically, residues 1–54 are cytoplasmic; the sequence is MPLIHRKKPTEKPSTPPSEEVVHDEDSQKKPHESSKSHHKKSNGGGKWSCIDSC. Positions 20-36 are enriched in basic and acidic residues; the sequence is EVVHDEDSQKKPHESSK. The helical transmembrane segment at 55 to 75 threads the bilayer; it reads CWFIGCVCVTWWFLLFLYNAM. The Lumenal portion of the chain corresponds to 76–671; that stretch reads PASFPQYVTE…EWSERIDLKL (596 aa). A glycan (N-linked (GlcNAc...) asparagine) is linked at Asn161. Ser254 functions as the Acyl-ester intermediate in the catalytic mechanism. 2 N-linked (GlcNAc...) asparagine glycosylation sites follow: Asn381 and Asn434. Residues Asp573 and His626 each act as charge relay system in the active site. An N-linked (GlcNAc...) asparagine glycan is attached at Asn647.

This sequence belongs to the AB hydrolase superfamily. Lipase family. Ubiquitous. Highest expression in young developing seeds.

It is found in the membrane. The catalysed reaction is a glycerophospholipid + a 1,2-diacyl-sn-glycerol = a monoacylglycerophospholipid + a triacyl-sn-glycerol. The protein operates within glycerolipid metabolism; triacylglycerol biosynthesis. In terms of biological role, triacylglycerol formation by an acyl-CoA independent pathway. The enzyme preferentially transfers acyl groups from the sn-2 position of a phospholipid to diacylglycerol, thus forming an sn-1-lysophospholipid. Involved in epoxy and hydroxy fatty acid accumulation in seeds. Has complementary functions with DAG1 that are essential for triacylglycerol synthesis and normal development of both seeds and pollen. The sequence is that of Phospholipid:diacylglycerol acyltransferase 1 (PDAT1) from Arabidopsis thaliana (Mouse-ear cress).